The following is a 378-amino-acid chain: Aminotransferase apf4 (378 aa).

Position 88 (R88) interacts with pyridoxal 5'-phosphate. K189 carries the N6-(pyridoxal phosphate)lysine modification. Residue E228 coordinates pyridoxal 5'-phosphate. A disordered region spans residues 359-378 (ERGHNGQPTADPTRVIEMPE).

The protein belongs to the class-IV pyridoxal-phosphate-dependent aminotransferase family. It depends on pyridoxal 5'-phosphate as a cofactor.

It participates in secondary metabolite biosynthesis. In terms of biological role, aminotransferase; part of the gene cluster that mediates the biosynthesis of the cyclic tetrapeptide apicidin F (APF). The non-ribosomal peptide synthetase apf1 incorporates four different amino acids to produce apicidin F: L-phenylalanine, D-pipecolic acid (D-pip), N-methoxy-L-tryptophan and L-2-aminooctanedioic acid. L-Phenylalanine is the only proteinogenic amino acid directly used by apf1. The 3 other apf1 substrates are non-proteinogenic and have to be modified by other enzymes of the cluster. Lysine is converted to delta-1-pyrroline-5-carboxylate (P5C) which is reduced to L-pipecolic acid (L-pip) by apf3. L-pip is epimerized to D-pip, probably by apf1 activity, prior to incorporation. L-Tryptophan is N-oxidyzed by one of the cytochrome P450 monooxygenases (apf7 or apf8), and further methylated at the hydroxy group by the O-methyltransferase apf6 to yield N-methoxy-L-tryptophan. The synthesis of the fourth apf1 substrate is more complex. The fatty acid synthase apf5 is involved in the synthesis of the octanoic acid backbone of L-2-aminooctanedioic acid by fixing one acetyl-CoA unit and three malonyl-CoA units. Then one of the cytochrome P450 monooxygenases (apf7 or apf8) may oxidize this backbone to 2-oxooctanoic acid. The aminotransferase apf4 is predicted to catalyze the exchange of the keto group with an amino group. The next step would be the oxidation of 2-aminooctanoic acid by one of the cytochrome P450 monooxygenases (apf7 or apf8). The last step is the oxidation of 2-amino-8-hydroxyoctanoic acid to 2-aminooctanedioic acid is catalyzed by the FAD-dependent monooxygenase apf9. This chain is Aminotransferase apf4, found in Gibberella fujikuroi (strain CBS 195.34 / IMI 58289 / NRRL A-6831) (Bakanae and foot rot disease fungus).